The primary structure comprises 96 residues: Co-chaperonin GroES (96 aa).

It belongs to the GroES chaperonin family. In terms of assembly, heptamer of 7 subunits arranged in a ring. Interacts with the chaperonin GroEL.

Its subcellular location is the cytoplasm. Together with the chaperonin GroEL, plays an essential role in assisting protein folding. The GroEL-GroES system forms a nano-cage that allows encapsulation of the non-native substrate proteins and provides a physical environment optimized to promote and accelerate protein folding. GroES binds to the apical surface of the GroEL ring, thereby capping the opening of the GroEL channel. The chain is Co-chaperonin GroES from Haemophilus influenzae (strain ATCC 51907 / DSM 11121 / KW20 / Rd).